The primary structure comprises 297 residues: ClpXP adapter protein SpxH (297 aa).

It belongs to the SpxH family. Interacts with Spx.

It localises to the cytoplasm. Functionally, adapter protein required for efficient degradation of Spx by ClpXP under non-stress conditions. Interaction with Spx stabilizes Spx and exposes the C-terminus of Spx for recognition and proteolysis by ClpXP. The chain is ClpXP adapter protein SpxH from Bacillus cereus (strain ZK / E33L).